The chain runs to 190 residues: Ferric nitrobindin-like protein (190 aa).

The short motif at 20–26 is the GXWXGXG element; sequence GNWAGAG.

Belongs to the nitrobindin family.

The chain is Ferric nitrobindin-like protein from Streptomyces griseus subsp. griseus (strain JCM 4626 / CBS 651.72 / NBRC 13350 / KCC S-0626 / ISP 5235).